A 300-amino-acid polypeptide reads, in one-letter code: N-acetylmannosamine kinase (300 aa).

ATP is bound by residues 5–12 and 132–139; these read ALDIGGTK and GVGGGIVL. Zn(2+) is bound by residues H156, C166, C168, and C173.

Belongs to the ROK (NagC/XylR) family. NanK subfamily. As to quaternary structure, homodimer.

It carries out the reaction an N-acyl-D-mannosamine + ATP = an N-acyl-D-mannosamine 6-phosphate + ADP + H(+). The protein operates within amino-sugar metabolism; N-acetylneuraminate degradation; D-fructose 6-phosphate from N-acetylneuraminate: step 2/5. In terms of biological role, catalyzes the phosphorylation of N-acetylmannosamine (ManNAc) to ManNAc-6-P. This Haemophilus influenzae (strain PittEE) protein is N-acetylmannosamine kinase.